The sequence spans 372 residues: Glutamate 5-kinase (372 aa).

Lys14 is an ATP binding site. Residues Ser54, Asp141, and Asn153 each coordinate substrate. 173 to 174 (TD) lines the ATP pocket. The PUA domain maps to 280–358 (RGHVVIDAGA…GEIETVLGYM (79 aa)).

Belongs to the glutamate 5-kinase family.

It is found in the cytoplasm. It carries out the reaction L-glutamate + ATP = L-glutamyl 5-phosphate + ADP. It functions in the pathway amino-acid biosynthesis; L-proline biosynthesis; L-glutamate 5-semialdehyde from L-glutamate: step 1/2. In terms of biological role, catalyzes the transfer of a phosphate group to glutamate to form L-glutamate 5-phosphate. This Burkholderia orbicola (strain AU 1054) protein is Glutamate 5-kinase.